The primary structure comprises 244 residues: tRNA (guanine-N(1)-)-methyltransferase (244 aa).

S-adenosyl-L-methionine-binding positions include G120 and I140–L145.

Belongs to the RNA methyltransferase TrmD family. Homodimer.

It localises to the cytoplasm. It catalyses the reaction guanosine(37) in tRNA + S-adenosyl-L-methionine = N(1)-methylguanosine(37) in tRNA + S-adenosyl-L-homocysteine + H(+). Functionally, specifically methylates guanosine-37 in various tRNAs. In Brucella canis (strain ATCC 23365 / NCTC 10854 / RM-666), this protein is tRNA (guanine-N(1)-)-methyltransferase.